The sequence spans 518 residues: Membrane-bound lytic murein transglycosylase F (518 aa).

Positions 1–21 (MKKLKINYLFIGILALLLAVA) are cleaved as a signal peptide. Residues 22–269 (LWPSIPWFGK…RIEEKYLGHG (248 aa)) form a non-LT domain region. Residues 270 to 518 (DDFDYVDTRT…SRKGSEEKQN (249 aa)) form an LT domain region. Glu314 is an active-site residue.

The protein in the N-terminal section; belongs to the bacterial solute-binding protein 3 family. This sequence in the C-terminal section; belongs to the transglycosylase Slt family.

Its subcellular location is the cell outer membrane. The enzyme catalyses Exolytic cleavage of the (1-&gt;4)-beta-glycosidic linkage between N-acetylmuramic acid (MurNAc) and N-acetylglucosamine (GlcNAc) residues in peptidoglycan, from either the reducing or the non-reducing ends of the peptidoglycan chains, with concomitant formation of a 1,6-anhydrobond in the MurNAc residue.. Its function is as follows. Murein-degrading enzyme that degrades murein glycan strands and insoluble, high-molecular weight murein sacculi, with the concomitant formation of a 1,6-anhydromuramoyl product. Lytic transglycosylases (LTs) play an integral role in the metabolism of the peptidoglycan (PG) sacculus. Their lytic action creates space within the PG sacculus to allow for its expansion as well as for the insertion of various structures such as secretion systems and flagella. This Shigella dysenteriae serotype 1 (strain Sd197) protein is Membrane-bound lytic murein transglycosylase F.